A 48-amino-acid polypeptide reads, in one-letter code: Disintegrin leucogastin-A (48 aa).

In terms of domain architecture, Disintegrin spans 1–47 (DCASGPCCRDCKFLEEFTICNMARGDDMNDYCNGKTCDCPRNPHKWP). 4 disulfides stabilise this stretch: Cys2-Cys11, Cys7-Cys32, Cys8-Cys37, and Cys20-Cys39. The short motif at 24-26 (RGD) is the Cell attachment site element.

It belongs to the venom metalloproteinase (M12B) family. P-II subfamily. P-IIa sub-subfamily. Monomer (disintegrin). In terms of tissue distribution, expressed by the venom gland.

Its subcellular location is the secreted. In terms of biological role, inhibits ADP-induced human platelet aggregation. This chain is Disintegrin leucogastin-A, found in Echis leucogaster (Roman's saw-scaled viper).